A 499-amino-acid polypeptide reads, in one-letter code: Glycerol kinase (499 aa).

T14 provides a ligand contact to ADP. The ATP site is built by T14, T15, and S16. T14 contacts sn-glycerol 3-phosphate. Position 18 (R18) interacts with ADP. R84, E85, Y136, and D245 together coordinate sn-glycerol 3-phosphate. 5 residues coordinate glycerol: R84, E85, Y136, D245, and Q246. 2 residues coordinate ADP: T267 and G310. T267, G310, Q314, and G411 together coordinate ATP. ADP-binding residues include G411 and N415.

Belongs to the FGGY kinase family.

It catalyses the reaction glycerol + ATP = sn-glycerol 3-phosphate + ADP + H(+). It functions in the pathway polyol metabolism; glycerol degradation via glycerol kinase pathway; sn-glycerol 3-phosphate from glycerol: step 1/1. With respect to regulation, inhibited by fructose 1,6-bisphosphate (FBP). Its function is as follows. Key enzyme in the regulation of glycerol uptake and metabolism. Catalyzes the phosphorylation of glycerol to yield sn-glycerol 3-phosphate. This is Glycerol kinase from Nitrosomonas eutropha (strain DSM 101675 / C91 / Nm57).